We begin with the raw amino-acid sequence, 226 residues long: Transmembrane 4 L6 family member 20 (226 aa).

Residues 1–14 (MTCCEGWTSCNGFS) lie on the Lumenal side of the membrane. Residues 15-35 (LLILILLGVVINCIPLGISLV) traverse the membrane as a helical segment. The Cytoplasmic portion of the chain corresponds to 36-49 (EADSTSQNPISCYE). A helical transmembrane segment spans residues 50–70 (WWFPGIIGAGLMAIPATTMSL). Over 71-83 (AARKRACCNNKTG) the chain is Lumenal. A helical membrane pass occupies residues 84 to 104 (MFLSSLFSVITVVGAVYCMLV). Topologically, residues 105-191 (SLQALLEGPL…RIFHFSVFMS (87 aa)) are cytoplasmic. The chain crosses the membrane as a helical span at residues 192-212 (LLLVGILELLFGLSQILIGFL). At 213–226 (GCLCGVSQRRSQIV) the chain is on the lumenal side.

It belongs to the L6 tetraspanin family. In terms of processing, glycosylated at Asn-132, Asn-148 and Asn-163 in presence of ceramide which inverts the orientation of TM4SF20 in membranes exposing these residues to the endoplasmic reticulum lumen. Cleaved by signal peptidase at Ser-14 but the peptide does not act as a signal peptide. Cleavage is inhibited by ceramide which inverts the orientation of TM4SF20 in membranes exposing the N-terminus to the cytosol and not to the endoplasmic reticulum lumen.

The protein resides in the membrane. It is found in the endoplasmic reticulum membrane. In terms of biological role, polytopic transmembrane protein. Inhibits regulated intramembrane proteolysis (RIP) of CREB3L1, inhibiting its activation and the induction of collagen synthesis. In response to ceramide, which alters TM4SF20 membrane topology, stimulates RIP activation of CREB3L1. Ceramide reverses the direction through which transmembrane helices are translocated into the endoplasmic reticulum membrane during translation of TM4SF20, this mechanism is called 'regulated alternative translocation' (RAT) and regulates the function of the transmembrane protein. This chain is Transmembrane 4 L6 family member 20 (Tm4sf20), found in Mus musculus (Mouse).